Consider the following 426-residue polypeptide: Serine--tRNA ligase (426 aa).

Residue 233-235 (TAE) participates in L-serine binding. ATP is bound at residue 264–266 (RSE). Glutamate 287 is a binding site for L-serine. 351–354 (EISS) serves as a coordination point for ATP. Serine 387 contacts L-serine.

The protein belongs to the class-II aminoacyl-tRNA synthetase family. Type-1 seryl-tRNA synthetase subfamily. In terms of assembly, homodimer. The tRNA molecule binds across the dimer.

The protein localises to the cytoplasm. The catalysed reaction is tRNA(Ser) + L-serine + ATP = L-seryl-tRNA(Ser) + AMP + diphosphate + H(+). It carries out the reaction tRNA(Sec) + L-serine + ATP = L-seryl-tRNA(Sec) + AMP + diphosphate + H(+). The protein operates within aminoacyl-tRNA biosynthesis; selenocysteinyl-tRNA(Sec) biosynthesis; L-seryl-tRNA(Sec) from L-serine and tRNA(Sec): step 1/1. Catalyzes the attachment of serine to tRNA(Ser). Is also able to aminoacylate tRNA(Sec) with serine, to form the misacylated tRNA L-seryl-tRNA(Sec), which will be further converted into selenocysteinyl-tRNA(Sec). The chain is Serine--tRNA ligase from Pseudomonas aeruginosa (strain LESB58).